We begin with the raw amino-acid sequence, 313 residues long: Platelet glycoprotein VI (313 aa).

The first 21 residues, Met-1–Thr-21, serve as a signal peptide directing secretion. Residues Gln-22–Lys-265 are Extracellular-facing. 2 consecutive Ig-like C2-type domains span residues Pro-27–Glu-105 and Pro-115–Asp-197. Cys-49 and Cys-89 are oxidised to a cystine. Asn-93 carries an N-linked (GlcNAc...) asparagine glycan. Cys-135 and Cys-181 are disulfide-bonded. Positions Val-213 to Ile-236 are disordered. N-linked (GlcNAc...) asparagine glycosylation is present at Asn-244. The helical transmembrane segment at Gly-266 to Ala-286 threads the bilayer. Over Glu-287 to Ala-313 the chain is Cytoplasmic.

Associated with Fc receptor gamma chain. The GPVI:FcRgamma complex is associated with the Src kinase family FYN and LYN. Interacts with TRAF4. Interacts with COL1A1, but not with COL4A4. In terms of tissue distribution, megakaryocytes and platelets.

Its subcellular location is the cell membrane. Collagen receptor involved in collagen-induced platelet adhesion and activation. Plays a key role in platelet procoagulant activity and subsequent thrombin and fibrin formation. This procoagulant function may contribute to arterial and venous thrombus formation. The signaling pathway involves the FcR gamma-chain, the Src kinases (likely FYN or LYN) and SYK, the adapter protein LAT and leads to the activation of PLCG2. In Mus musculus (Mouse), this protein is Platelet glycoprotein VI.